The chain runs to 127 residues: Large ribosomal subunit protein bL17 (127 aa).

This sequence belongs to the bacterial ribosomal protein bL17 family. As to quaternary structure, part of the 50S ribosomal subunit. Contacts protein L32.

The chain is Large ribosomal subunit protein bL17 from Pelobacter propionicus (strain DSM 2379 / NBRC 103807 / OttBd1).